Reading from the N-terminus, the 24-residue chain is Poly-His-poly-Gly peptide 1 (24 aa).

A compositionally biased stretch (basic residues) spans E1 to G13. Residues E1–G24 are disordered. Residues V14 to G24 show a composition bias toward gly residues.

Expressed by the venom gland.

Its subcellular location is the secreted. In terms of biological role, may serve as a metalloproteinase inhibitor during glandular storage. Their inhibition may be instantly disengaged, by dilution or physiochemical change, when venom is injected into tissue of the victim. The sequence is that of Poly-His-poly-Gly peptide 1 from Atheris chlorechis (Western bush viper).